We begin with the raw amino-acid sequence, 642 residues long: Threonine--tRNA ligase (642 aa).

Residues 1-61 (MPVITITNGL…MQDSKLDIIT (61 aa)) enclose the TGS domain. The catalytic stretch occupies residues 243–534 (DHRKIGQQLD…LIEEYAGFFP (292 aa)). Residues Cys-334, His-385, and His-511 each coordinate Zn(2+).

This sequence belongs to the class-II aminoacyl-tRNA synthetase family. In terms of assembly, homodimer. Zn(2+) is required as a cofactor.

It localises to the cytoplasm. The enzyme catalyses tRNA(Thr) + L-threonine + ATP = L-threonyl-tRNA(Thr) + AMP + diphosphate + H(+). In terms of biological role, catalyzes the attachment of threonine to tRNA(Thr) in a two-step reaction: L-threonine is first activated by ATP to form Thr-AMP and then transferred to the acceptor end of tRNA(Thr). Also edits incorrectly charged L-seryl-tRNA(Thr). This Baumannia cicadellinicola subsp. Homalodisca coagulata protein is Threonine--tRNA ligase.